A 277-amino-acid chain; its full sequence is 2-dehydro-3-deoxyphosphooctonate aldolase (277 aa).

Belongs to the KdsA family.

It localises to the cytoplasm. It carries out the reaction D-arabinose 5-phosphate + phosphoenolpyruvate + H2O = 3-deoxy-alpha-D-manno-2-octulosonate-8-phosphate + phosphate. It participates in carbohydrate biosynthesis; 3-deoxy-D-manno-octulosonate biosynthesis; 3-deoxy-D-manno-octulosonate from D-ribulose 5-phosphate: step 2/3. It functions in the pathway bacterial outer membrane biogenesis; lipopolysaccharide biosynthesis. The chain is 2-dehydro-3-deoxyphosphooctonate aldolase from Brucella canis (strain ATCC 23365 / NCTC 10854 / RM-666).